Here is a 418-residue protein sequence, read N- to C-terminus: Glutamyl-tRNA reductase (418 aa).

Residues 49–52, Ser-105, 110–112, and Gln-116 each bind substrate; these read TCNR and EPQ. Cys-50 (nucleophile) is an active-site residue. 185–190 provides a ligand contact to NADP(+); it reads GAGEMI.

Belongs to the glutamyl-tRNA reductase family. In terms of assembly, homodimer.

The catalysed reaction is (S)-4-amino-5-oxopentanoate + tRNA(Glu) + NADP(+) = L-glutamyl-tRNA(Glu) + NADPH + H(+). Its pathway is porphyrin-containing compound metabolism; protoporphyrin-IX biosynthesis; 5-aminolevulinate from L-glutamyl-tRNA(Glu): step 1/2. Its function is as follows. Catalyzes the NADPH-dependent reduction of glutamyl-tRNA(Glu) to glutamate 1-semialdehyde (GSA). This chain is Glutamyl-tRNA reductase, found in Aromatoleum aromaticum (strain DSM 19018 / LMG 30748 / EbN1) (Azoarcus sp. (strain EbN1)).